Here is a 105-residue protein sequence, read N- to C-terminus: N(4)-acetylcytidine amidohydrolase (105 aa).

An ASCH domain is found at threonine 7–glutamate 93. Lysine 21 (proton acceptor) is an active-site residue. The active-site Nucleophile is threonine 24. Catalysis depends on glutamate 74, which acts as the Proton donor.

Belongs to the N(4)-acetylcytidine amidohydrolase family.

The enzyme catalyses N(4)-acetylcytidine + H2O = cytidine + acetate + H(+). It catalyses the reaction N(4)-acetyl-2'-deoxycytidine + H2O = 2'-deoxycytidine + acetate + H(+). The catalysed reaction is N(4)-acetylcytosine + H2O = cytosine + acetate + H(+). Its function is as follows. Catalyzes the hydrolysis of N(4)-acetylcytidine (ac4C). The chain is N(4)-acetylcytidine amidohydrolase from Shewanella baltica (strain OS223).